Here is a 268-residue protein sequence, read N- to C-terminus: Ribosomal RNA small subunit methyltransferase A (268 aa).

S-adenosyl-L-methionine is bound by residues Asn23, Ile25, Gly50, Glu72, Asp97, and Asn116.

The protein belongs to the class I-like SAM-binding methyltransferase superfamily. rRNA adenine N(6)-methyltransferase family. RsmA subfamily.

The protein localises to the cytoplasm. It catalyses the reaction adenosine(1518)/adenosine(1519) in 16S rRNA + 4 S-adenosyl-L-methionine = N(6)-dimethyladenosine(1518)/N(6)-dimethyladenosine(1519) in 16S rRNA + 4 S-adenosyl-L-homocysteine + 4 H(+). In terms of biological role, specifically dimethylates two adjacent adenosines (A1518 and A1519) in the loop of a conserved hairpin near the 3'-end of 16S rRNA in the 30S particle. May play a critical role in biogenesis of 30S subunits. This Rickettsia bellii (strain RML369-C) protein is Ribosomal RNA small subunit methyltransferase A.